The sequence spans 337 residues: Carbonic anhydrase 14 (337 aa).

A signal peptide spans 1-15 (MLFSALLLEVIWILA). The Extracellular portion of the chain corresponds to 16–290 (ADGGQHWTYE…AGSSYTTGEM (275 aa)). The Alpha-carbonic anhydrase domain occupies 20–278 (QHWTYEGPHG…LNQRMVFASF (259 aa)). C40 and C221 form a disulfide bridge. H84 functions as the Proton donor/acceptor in the catalytic mechanism. Zn(2+) contacts are provided by H109, H111, and H135. A glycan (N-linked (GlcNAc...) asparagine) is linked at N213. Residue 217–218 (TT) participates in substrate binding. The chain crosses the membrane as a helical span at residues 291-311 (LSLGVGILVGCLCLLLAVYFI). Topologically, residues 312–337 (ARKIRKKRLENRKSVVFTSAQATTEA) are cytoplasmic. A Phosphoserine modification is found at S325.

The protein belongs to the alpha-carbonic anhydrase family. Requires Zn(2+) as cofactor. As to expression, high expression in all parts of the central nervous system and lower expression in adult liver, heart, small intestine, colon, kidney, urinary bladder and skeletal muscle.

The protein localises to the membrane. It carries out the reaction hydrogencarbonate + H(+) = CO2 + H2O. With respect to regulation, activated by histamine, L-adrenaline, L- and D-histidine, and L- and D-phenylalanine. Inhibited by coumarins, saccharin, sulfonamide derivatives such as acetazolamide (AZA) and Foscarnet (phosphonoformate trisodium salt). Reversible hydration of carbon dioxide. The chain is Carbonic anhydrase 14 (CA14) from Homo sapiens (Human).